The primary structure comprises 633 residues: Transcriptional repressor p66-alpha (633 aa).

Over residues 1–18 (MTEEACRTRSQKRALERD) the composition is skewed to basic and acidic residues. 2 disordered regions span residues 1 to 59 (MTEE…PTQG) and 73 to 119 (RGEG…RVNG). 2 positions are modified to phosphothreonine: Thr20 and Thr49. A compositionally biased stretch (basic and acidic residues) spans 86–99 (RTSHSDMKSERRPP). Lys93 participates in a covalent cross-link: Glycyl lysine isopeptide (Lys-Gly) (interchain with G-Cter in SUMO2). Phosphoserine occurs at positions 100, 107, 113, 114, and 137. Polar residues predominate over residues 108-119 (DNEQPSSPRVNG). Residues 139-174 (EERERMIKQLKEELRLEEAKLVLLKKLRQSQIQKEA) are a coiled coil. The interval 144-178 (MIKQLKEELRLEEAKLVLLKKLRQSQIQKEATAQK) is CR1; interaction with HDAC1, HDAC2, MBD2 and MTA2. Residues 172-188 (KEATAQKPTGSVGSTVT) are compositionally biased toward polar residues. Positions 172–238 (KEATAQKPTG…QASSKLGPQA (67 aa)) are disordered. Lys178 participates in a covalent cross-link: Glycyl lysine isopeptide (Lys-Gly) (interchain with G-Cter in SUMO2). The interaction with ZMYND8 stretch occupies residues 181-295 (GSVGSTVTTP…IIQQGLIRVA (115 aa)). A Phosphothreonine modification is found at Thr189. A compositionally biased stretch (polar residues) spans 196–212 (GTQNIPAGKPSLQTSSA). Lys204 is covalently cross-linked (Glycyl lysine isopeptide (Lys-Gly) (interchain with G-Cter in SUMO2)). Arg225 bears the Omega-N-methylarginine mark. Polar residues predominate over residues 228–238 (QQASSKLGPQA). Residue Lys233 forms a Glycyl lysine isopeptide (Lys-Gly) (interchain with G-Cter in SUMO2) linkage. 3 positions are modified to omega-N-methylarginine: Arg249, Arg258, and Arg273. Ser275 carries the phosphoserine modification. Arg285 carries the omega-N-methylarginine modification. Residues Ser340 and Ser343 each carry the phosphoserine modification. A CR2; histone tail-binding and interaction with CHD4 and CDK2AP1 region spans residues 340–480 (SPASRQAAAK…EIEQRLLQQG (141 aa)). The GATA-type zinc finger occupies 411-464 (SREPYMCAQCKTDFTCRWREEKSGAIMCENCMTTNQKKALKVEHTSRLKAAFVK). Glycyl lysine isopeptide (Lys-Gly) (interchain with G-Cter in SUMO2) cross-links involve residues Lys464 and Lys487. Position 512 is a phosphoserine (Ser512). The residue at position 539 (Arg539) is an Asymmetric dimethylarginine; alternate. Residue Arg539 is modified to Omega-N-methylarginine; alternate. Phosphoserine is present on residues Ser546 and Ser548. A Glycyl lysine isopeptide (Lys-Gly) (interchain with G-Cter in SUMO2) cross-link involves residue Lys550. Phosphoserine is present on Ser556. The tract at residues 561–585 (VSRTGRHSERTVSAGKGSATSNWKK) is disordered. Residue Lys585 forms a Glycyl lysine isopeptide (Lys-Gly) (interchain with G-Cter in SUMO2) linkage. A Phosphoserine modification is found at Ser598. Residue Lys605 forms a Glycyl lysine isopeptide (Lys-Gly) (interchain with G-Cter in SUMO2) linkage.

As to quaternary structure, homooligomer. Component of the nucleosome remodeling and deacetylase (NuRD) repressor complex, composed of core proteins MTA1, MTA2, MTA3, RBBP4, RBBP7, HDAC1, HDAC2, MBD2, MBD3, and peripherally associated proteins CDK2AP1, CDK2AP2, GATAD2A, GATAD2B, CHD3, CHD4 and CHD5. The exact stoichiometry of the NuRD complex is unknown, and some subunits such as MBD2 and MBD3, GATAD2A and GATAD2B, and CHD3, CHD4 and CHD5 define mutually exclusive NuRD complexes. Component of the MeCP1 histone deacetylase complex. Interacts with CDK2AP1. Interacts with CHD4. Interacts with ERCC6. Interacts with HDAC1. Interacts with HDAC2. Interacts with MBD2; this interaction is required for the enhancement of MBD2-mediated repression and for targeting to the chromatin. Interacts with MBD3. Interacts with MTA2. Interacts with ZMYND8. Interacts with histone tails, including that of histones H2A, H2B, H3 and H4, the interaction is reduced by histone acetylation. As to expression, ubiquitous, both in fetal and adult tissues.

It localises to the nucleus speckle. The protein resides in the nucleus. It is found in the chromosome. Functionally, transcriptional repressor. Acts as a component of the histone deacetylase NuRD complex which participates in the remodeling of chromatin. Enhances MBD2-mediated repression. Efficient repression requires the presence of GATAD2B. This Homo sapiens (Human) protein is Transcriptional repressor p66-alpha (GATAD2A).